The sequence spans 688 residues: Glycine--tRNA ligase beta subunit (688 aa).

The protein belongs to the class-II aminoacyl-tRNA synthetase family. In terms of assembly, tetramer of two alpha and two beta subunits.

It localises to the cytoplasm. It catalyses the reaction tRNA(Gly) + glycine + ATP = glycyl-tRNA(Gly) + AMP + diphosphate. This Syntrophomonas wolfei subsp. wolfei (strain DSM 2245B / Goettingen) protein is Glycine--tRNA ligase beta subunit.